Consider the following 93-residue polypeptide: HssA/B-like protein 26 (93 aa).

It belongs to the hssA/B family.

This is HssA/B-like protein 26 (hssl26) from Dictyostelium discoideum (Social amoeba).